Consider the following 268-residue polypeptide: Ribosomal RNA small subunit methyltransferase A (268 aa).

Positions 18, 20, 45, 66, 91, and 112 each coordinate S-adenosyl-L-methionine.

It belongs to the class I-like SAM-binding methyltransferase superfamily. rRNA adenine N(6)-methyltransferase family. RsmA subfamily.

It is found in the cytoplasm. It catalyses the reaction adenosine(1518)/adenosine(1519) in 16S rRNA + 4 S-adenosyl-L-methionine = N(6)-dimethyladenosine(1518)/N(6)-dimethyladenosine(1519) in 16S rRNA + 4 S-adenosyl-L-homocysteine + 4 H(+). In terms of biological role, specifically dimethylates two adjacent adenosines (A1518 and A1519) in the loop of a conserved hairpin near the 3'-end of 16S rRNA in the 30S particle. May play a critical role in biogenesis of 30S subunits. This Vibrio vulnificus (strain CMCP6) protein is Ribosomal RNA small subunit methyltransferase A.